The primary structure comprises 427 residues: Enolase (427 aa).

Glutamine 162 lines the (2R)-2-phosphoglycerate pocket. Glutamate 204 serves as the catalytic Proton donor. Positions 241, 282, and 309 each coordinate Mg(2+). (2R)-2-phosphoglycerate is bound by residues lysine 334, arginine 363, serine 364, and lysine 385. Catalysis depends on lysine 334, which acts as the Proton acceptor.

It belongs to the enolase family. Mg(2+) serves as cofactor.

Its subcellular location is the cytoplasm. The protein resides in the secreted. It localises to the cell surface. It carries out the reaction (2R)-2-phosphoglycerate = phosphoenolpyruvate + H2O. It functions in the pathway carbohydrate degradation; glycolysis; pyruvate from D-glyceraldehyde 3-phosphate: step 4/5. Functionally, catalyzes the reversible conversion of 2-phosphoglycerate (2-PG) into phosphoenolpyruvate (PEP). It is essential for the degradation of carbohydrates via glycolysis. This is Enolase from Frankia casuarinae (strain DSM 45818 / CECT 9043 / HFP020203 / CcI3).